The following is a 284-amino-acid chain: Ribose-5-phosphate isomerase (284 aa).

It belongs to the ribose 5-phosphate isomerase family.

The protein resides in the cytoplasm. The catalysed reaction is aldehydo-D-ribose 5-phosphate = D-ribulose 5-phosphate. It functions in the pathway carbohydrate degradation; pentose phosphate pathway; D-ribose 5-phosphate from D-ribulose 5-phosphate (non-oxidative stage): step 1/1. The sequence is that of Ribose-5-phosphate isomerase (RKI1) from Lodderomyces elongisporus (strain ATCC 11503 / CBS 2605 / JCM 1781 / NBRC 1676 / NRRL YB-4239) (Yeast).